We begin with the raw amino-acid sequence, 400 residues long: Vitamin K-dependent protein Z (400 aa).

The first 23 residues, 1-23 (MAGCVPLLQGLVLVLALHRVEPS), serve as a signal peptide directing secretion. Positions 24 to 40 (VFLPASKANDVLVRWKR) are excised as a propeptide. The Gla domain maps to 41 to 86 (AGSYLLEELFEGNLEKECYEEICVYEEAREVFENEVVTDEFWRRYK). 4-carboxyglutamate occurs at positions 47, 48, 51, 55, 57, 60, 61, 66, 67, 70, 73, 75, and 80. Cys58 and Cys63 are oxidised to a cystine. 2 EGF-like domains span residues 87-123 (GGSPCISQPCLHNGSCQDSIWGYTCTCSPGYEGSNCE) and 125-166 (AKNE…KQCV). Intrachain disulfides connect Cys91-Cys102, Cys96-Cys111, Cys113-Cys122, Cys129-Cys141, Cys137-Cys150, Cys152-Cys165, and Cys203-Cys219. An O-linked (Glc...) serine glycan is attached at Ser93. A glycan (N-linked (GlcNAc...) asparagine) is linked at Asn99. Asp104 is subject to (3R)-3-hydroxyaspartate. The Peptidase S1 domain occupies 175 to 400 (VLTSEKRAPD…YSLWFKQIMN (226 aa)). N-linked (GlcNAc...) asparagine glycosylation is found at Asn225, Asn233, Asn306, and Asn332. A disulfide bond links Cys327 and Cys341.

It belongs to the peptidase S1 family. As to quaternary structure, interacts with SERPINA10. Post-translationally, the iron and 2-oxoglutarate dependent 3-hydroxylation of aspartate and asparagine is (R) stereospecific within EGF domains. In terms of tissue distribution, plasma.

The protein localises to the secreted. Functionally, appears to assist hemostasis by binding thrombin and promoting its association with phospholipid vesicles. Inhibits activity of the coagulation protease factor Xa in the presence of SERPINA10, calcium and phospholipids. The sequence is that of Vitamin K-dependent protein Z (PROZ) from Homo sapiens (Human).